Reading from the N-terminus, the 196-residue chain is Large ribosomal subunit protein bL25 (196 aa).

Belongs to the bacterial ribosomal protein bL25 family. CTC subfamily. As to quaternary structure, part of the 50S ribosomal subunit; part of the 5S rRNA/L5/L18/L25 subcomplex. Contacts the 5S rRNA. Binds to the 5S rRNA independently of L5 and L18.

In terms of biological role, this is one of the proteins that binds to the 5S RNA in the ribosome where it forms part of the central protuberance. This Bacteroides thetaiotaomicron (strain ATCC 29148 / DSM 2079 / JCM 5827 / CCUG 10774 / NCTC 10582 / VPI-5482 / E50) protein is Large ribosomal subunit protein bL25.